A 262-amino-acid polypeptide reads, in one-letter code: Rhomboid-type serine protease 2 (262 aa).

Over 1 to 16 the chain is Cytoplasmic; the sequence is MNWKSYVFPGGHPPAA. A helical transmembrane segment spans residues 17–37; the sequence is LTTGLVVFLTAIYLLSFIFAL. At 38–57 the chain is on the lumenal side; sequence REDLSLAPESLFKLQMSRLS. A helical transmembrane segment spans residues 58–78; the sequence is LYPLIHLSLPHLLFNVLAIWA. Residues 79-89 lie on the Cytoplasmic side of the membrane; the sequence is PLNLFEETHGT. A helical transmembrane segment spans residues 90-110; the sequence is VYTGVFLNLSALFAGILYCLL. Topologically, residues 111-112 are lumenal; the sequence is GK. The chain crosses the membrane as a helical span at residues 113-133; the sequence is LLYPEALVAGASGWCFTLFAY. Serine 124 serves as the catalytic Nucleophile. The Cytoplasmic portion of the chain corresponds to 134-151; sequence YSFKESQIRPRTRIFRTD. A helical transmembrane segment spans residues 152–168; sequence YSIPTLYTPLVLLVAIA. The Lumenal portion of the chain corresponds to 169-174; the sequence is VVIPGS. The chain crosses the membrane as a helical span at residues 175 to 191; the sequence is SFWGHFFGLCVGYAIGY. Residue histidine 179 is part of the active site. Over 192–262 the chain is Cytoplasmic; it reads KESWFNKITP…DNSGTVLGTA (71 aa). A disordered region spans residues 243 to 262; that stretch reads STETPLPLHNDNSGTVLGTA. Over residues 252-262 the composition is skewed to polar residues; that stretch reads NDNSGTVLGTA.

This sequence belongs to the peptidase S54 family. In terms of assembly, interacts with SNX3.

Its subcellular location is the golgi apparatus membrane. The protein localises to the golgi apparatus. It localises to the cis-Golgi network membrane. It catalyses the reaction Cleaves type-1 transmembrane domains using a catalytic dyad composed of serine and histidine that are contributed by different transmembrane domains.. Its function is as follows. Probable rhomboid-type serine protease that catalyzes intramembrane proteolysis. The polypeptide is Rhomboid-type serine protease 2 (RBD2) (Saccharomyces cerevisiae (strain ATCC 204508 / S288c) (Baker's yeast)).